The following is a 965-amino-acid chain: Probable ion channel POLLUX (965 aa).

A compositionally biased stretch (low complexity) spans 1 to 11 (MAESDGGEASP). Disordered regions lie at residues 1 to 76 (MAES…APRG) and 108 to 158 (GPHA…KSLA). Residues 32–42 (LTKSRTISGSA) are compositionally biased toward polar residues. Low complexity-rich tracts occupy residues 52-66 (SNSS…SSTA) and 118-149 (RSQQ…ASVS). 4 helical membrane passes run 187-207 (LSPY…LAIW), 251-271 (ADWN…VFLV), 317-337 (LALL…LYVV), and 369-389 (IVSV…LGLV). 2 RCK N-terminal domains span residues 410–551 (VNHI…ETVV) and 670–818 (PEKI…DKSI).

It belongs to the castor/pollux (TC 1.A.1.23) family. As to expression, expressed in roots, leaves, stems and panicles.

The protein localises to the nucleus membrane. Functionally, required for mycorrhizal symbiosis. The sequence is that of Probable ion channel POLLUX from Oryza sativa subsp. japonica (Rice).